The sequence spans 76 residues: Frizzled-3 (76 aa).

Residues 1 to 5 (YPERP) are Cytoplasmic-facing. Residues 6–26 (IIFYAVCYMMVSLIFFIGFLL) form a helical membrane-spanning segment. Topologically, residues 27 to 54 (EDRVACNASSPAQYKASTVTQGSHNKAC) are extracellular. A glycan (N-linked (GlcNAc...) asparagine) is linked at Asn33. A helical membrane pass occupies residues 55–75 (TMLFMVLYFFTMAGSVWWVIL). Position 76 (Arg76) is a topological domain, cytoplasmic.

The protein belongs to the G-protein coupled receptor Fz/Smo family.

It is found in the membrane. Its subcellular location is the cell membrane. The protein localises to the cell surface. It localises to the apical cell membrane. In terms of biological role, receptor for Wnt proteins. Most of frizzled receptors are coupled to the beta-catenin canonical signaling pathway, which leads to the activation of disheveled proteins, inhibition of GSK-3 kinase, nuclear accumulation of beta-catenin and activation of Wnt target genes. A second signaling pathway involving PKC and calcium fluxes has been seen for some family members, but it is not yet clear if it represents a distinct pathway or if it can be integrated in the canonical pathway, as PKC seems to be required for Wnt-mediated inactivation of GSK-3 kinase. Both pathways seem to involve interactions with G-proteins. May be involved in transduction and intercellular transmission of polarity information during tissue morphogenesis and/or in differentiated tissues. Plays a role in controlling early axon growth and guidance processes necessary for the formation of a subset of central and peripheral major fiber tracts. Involved in the migration of cranial neural crest cells. May also be implicated in the transmission of sensory information from the trunk and limbs to the brain. Controls commissural sensory axons guidance after midline crossing along the anterior-posterior axis in the developing spinal cord in a Wnt-dependent signaling pathway. Together with FZD6, is involved in the neural tube closure and plays a role in the regulation of the establishment of planar cell polarity (PCP). Promotes neurogenesis by maintaining sympathetic neuroblasts within the cell cycle in a beta-catenin-dependent manner. The protein is Frizzled-3 (FZD3) of Gallus gallus (Chicken).